We begin with the raw amino-acid sequence, 524 residues long: Lycopene epsilon cyclase, chloroplastic (524 aa).

Residues 1 to 45 constitute a chloroplast transit peptide; the sequence is MECVGARNFAAMAVSTFPSWSCRRKFPVVKRYSYRNIRFGLCSVR. 111-139 is a binding site for NAD(+); it reads LVVIGCGPAGLALAAESAKLGLKVGLIGP. Transmembrane regions (helical) follow at residues 441–461 and 475–495; these read FFLFGLALIVQFDTEGIRSFF and FLGSTLTSGDLVLFALYMFVI.

It belongs to the lycopene cyclase family.

It is found in the plastid. The protein localises to the chloroplast membrane. It catalyses the reaction a carotenoid psi-end group = a carotenoid epsilon-end group. The protein operates within carotenoid biosynthesis; alpha-zeacarotene biosynthesis. It participates in carotenoid biosynthesis; delta-carotene biosynthesis. Involved in carotenoid biosynthesis. Catalyzes the single epsilon-cyclization reaction which converts lycopene to delta-carotene and neurosporene to alpha-zeacarotene. Required for lutein biosynthesis. This chain is Lycopene epsilon cyclase, chloroplastic, found in Arabidopsis thaliana (Mouse-ear cress).